The chain runs to 427 residues: FAD-dependent monooxygenase OpS4 (427 aa).

The first 22 residues, 1–22, serve as a signal peptide directing secretion; it reads MGSIREPLHLVVIGGGLAGLSA. E37 serves as a coordination point for FAD. An N-linked (GlcNAc...) asparagine glycan is attached at N54. FAD-binding residues include R112, D306, and A319.

This sequence belongs to the paxM FAD-dependent monooxygenase family. Requires FAD as cofactor.

Its pathway is secondary metabolite biosynthesis. In terms of biological role, FAD-dependent monooxygenase; part of the gene cluster that mediates the biosynthesis of the bibenzoquinone oosporein, a metabolite required for fungal virulence that acts by evading host immunity to facilitate fungal multiplication in insects. The non-reducing polyketide synthase OpS1 produces orsellinic acid by condensing acetyl-CoA with 3 malonyl-CoA units. Orsellinic acid is then hydroxylated to benzenetriol by the hydroxylase OpS4. The intermediate is oxidized either nonenzymatically to 5,5'-dideoxy-oosporein or enzymatically to benzenetetrol by the oxidoreductase OpS7. The latter is further dimerized to oosporein by the catalase OpS5. OpS6 probably functions en route for protecting cells against oxidative stress by scavenging any leaked free radical form of benzenetetrol by activating the thiol group of glutathione. In Beauveria bassiana (strain ARSEF 2860) (White muscardine disease fungus), this protein is FAD-dependent monooxygenase OpS4.